We begin with the raw amino-acid sequence, 521 residues long: MLAKGLPPRSVLVKGCQTFLSAPKERLGHLRVPTSEGAGISTRSPRPFNEIPSPGDNGWLNLYHFWRETGTHKVHLHHVQNFQKYDPIYREKLGNVESVYVIDPEDVALLFKSEGPNPERFLIPPWVAYHQYYQRPIGVLLKKSAAWKKDRVALNQEVMAPETTKNFLPLLDAVSRDFVSVLHRRIKKAGSGNFSGDISDDLFRFAFESITNVIFGERQGMLEEVVNPEGQRFIDAIYQMFHTSVHMLNLPPDLFRLFRTKTWKDHVAPRDVIFSKADMYTENFHWELRQKGNVHHDYRGILYRLLGDSKMSFEDIKANVTEMLAGGVDTTSMTLQWHLYEMARNLKVQDMLRAEVLAARRQAQGDMATILQLVPLLKASIKETLRLHPISVTLQRYLVNDLVLRGYMIPAKTLVQVAIYALGREPTFFFDPENFDPTRWLSKDKNITYFRNLGFGWGVRQCLGRRIAELEMTIFLINMLENFRVEIQHLSDVGTTFNLILMPEKPISFTFWPFNQEATQE.

Residues 1-39 (MLAKGLPPRSVLVKGCQTFLSAPKERLGHLRVPTSEGAG) constitute a mitochondrion transit peptide. Cys462 is a heme binding site.

Belongs to the cytochrome P450 family. As to quaternary structure, interacts with FDX1/adrenodoxin. Heme is required as a cofactor.

The protein resides in the mitochondrion inner membrane. It catalyses the reaction 6 reduced [adrenodoxin] + cholesterol + 3 O2 + 6 H(+) = 4-methylpentanal + pregnenolone + 6 oxidized [adrenodoxin] + 4 H2O. The catalysed reaction is 2 reduced [adrenodoxin] + cholesterol + O2 + 2 H(+) = (22R)-hydroxycholesterol + 2 oxidized [adrenodoxin] + H2O. It carries out the reaction (22R)-hydroxycholesterol + 2 reduced [adrenodoxin] + O2 + 2 H(+) = (20R,22R)-20,22-dihydroxycholesterol + 2 oxidized [adrenodoxin] + H2O. The enzyme catalyses (20R,22R)-20,22-dihydroxycholesterol + 2 reduced [adrenodoxin] + O2 + 2 H(+) = 4-methylpentanal + pregnenolone + 2 oxidized [adrenodoxin] + 2 H2O. Its pathway is lipid metabolism; C21-steroid hormone metabolism. It functions in the pathway steroid metabolism; cholesterol metabolism. Functionally, a cytochrome P450 monooxygenase that catalyzes the side-chain hydroxylation and cleavage of cholesterol to pregnenolone, the precursor of most steroid hormones. Catalyzes three sequential oxidation reactions of cholesterol, namely the hydroxylation at C22 followed with the hydroxylation at C20 to yield 20R,22R-hydroxycholesterol that is further cleaved between C20 and C22 to yield the C21-steroid pregnenolone and 4-methylpentanal. Mechanistically, uses molecular oxygen inserting one oxygen atom into a substrate and reducing the second into a water molecule. Two electrons are provided by NADPH via a two-protein mitochondrial transfer system comprising flavoprotein FDXR (adrenodoxin/ferredoxin reductase) and nonheme iron-sulfur protein FDX1 or FDX2 (adrenodoxin/ferredoxin). In Macaca fascicularis (Crab-eating macaque), this protein is Cholesterol side-chain cleavage enzyme, mitochondrial (CYP11A1).